Consider the following 316-residue polypeptide: D-alanine--D-alanine ligase (316 aa).

In terms of domain architecture, ATP-grasp spans 104 to 303 (KRVWLQHGLP…YADLCVAILA (200 aa)). 130 to 185 (PDRLGLPLILKPPHEGSTVGITKVAGYSDMKAAYELAARFDAEVLAEQFITGRELT) provides a ligand contact to ATP. Mg(2+) contacts are provided by Asp257, Glu270, and Asn272.

This sequence belongs to the D-alanine--D-alanine ligase family. Mg(2+) is required as a cofactor. Requires Mn(2+) as cofactor.

It is found in the cytoplasm. It catalyses the reaction 2 D-alanine + ATP = D-alanyl-D-alanine + ADP + phosphate + H(+). The protein operates within cell wall biogenesis; peptidoglycan biosynthesis. Cell wall formation. The protein is D-alanine--D-alanine ligase of Bordetella parapertussis (strain 12822 / ATCC BAA-587 / NCTC 13253).